We begin with the raw amino-acid sequence, 503 residues long: Angiopoietin-4 (503 aa).

The first 24 residues, 1–24 (MLSQLAMLQGSLLLVVATMSVAQQ), serve as a signal peptide directing secretion. A coiled-coil region spans residues 84-238 (TQQVKQLEQA…RQSAALTNIE (155 aa)). Residues Asn96, Asn126, Asn140, Asn158, Asn247, Asn274, Asn311, Asn337, and Asn427 are each glycosylated (N-linked (GlcNAc...) asparagine). The Fibrinogen C-terminal domain occupies 282-502 (MAGEQVFQDC…ASRMMIRPLD (221 aa)). A disulfide bridge links Cys291 with Cys320. A disulfide bond links Cys444 and Cys457.

In terms of assembly, homodimer; disulfide-linked. Interacts with TEK/TIE2. In terms of tissue distribution, highly expressed in the lung with much lower levels found in other tissues.

It localises to the secreted. Binds to TEK/TIE2, modulating ANGPT1 signaling. Can induce tyrosine phosphorylation of TEK/TIE2. Promotes endothelial cell survival, migration and angiogenesis. The polypeptide is Angiopoietin-4 (ANGPT4) (Homo sapiens (Human)).